We begin with the raw amino-acid sequence, 127 residues long: Holo-[acyl-carrier-protein] synthase (127 aa).

Mg(2+) is bound by residues Asp9 and Glu58.

This sequence belongs to the P-Pant transferase superfamily. AcpS family. It depends on Mg(2+) as a cofactor.

The protein localises to the cytoplasm. It catalyses the reaction apo-[ACP] + CoA = holo-[ACP] + adenosine 3',5'-bisphosphate + H(+). Transfers the 4'-phosphopantetheine moiety from coenzyme A to a Ser of acyl-carrier-protein. This Shewanella sp. (strain MR-7) protein is Holo-[acyl-carrier-protein] synthase.